The following is a 505-amino-acid chain: Lysine--tRNA ligase (505 aa).

Residues Glu415 and Glu422 each coordinate Mg(2+).

The protein belongs to the class-II aminoacyl-tRNA synthetase family. In terms of assembly, homodimer. It depends on Mg(2+) as a cofactor.

Its subcellular location is the cytoplasm. The enzyme catalyses tRNA(Lys) + L-lysine + ATP = L-lysyl-tRNA(Lys) + AMP + diphosphate. The protein is Lysine--tRNA ligase of Shigella dysenteriae serotype 1 (strain Sd197).